We begin with the raw amino-acid sequence, 780 residues long: ATP-dependent 6-phosphofructokinase, muscle type (780 aa).

N-acetylthreonine is present on T2. Residues 2–390 are N-terminal catalytic PFK domain 1; that stretch reads THEEHHAAKT…NWEVYKLLAH (389 aa). ATP-binding positions include G25, 88–89, and 118–121; these read RC and GDGS. D119 contributes to the Mg(2+) binding site. A Phosphoserine modification is found at S133. Residues 164–166, R201, 208–210, E264, R292, and 298–301 each bind substrate; these read SID, MGR, and HVQR. D166 (proton acceptor) is an active-site residue. Position 377 is a phosphoserine (S377). The tract at residues 391–401 is interdomain linker; it reads VRPPVSKSGSH. Positions 402-780 are C-terminal regulatory PFK domain 2; that stretch reads TVAVMNVGAP…TRKRSGEGAV (379 aa). Beta-D-fructose 2,6-bisphosphate contacts are provided by residues R471 and 528–532; that span reads TVSNN. The O-linked (GlcNAc) serine glycan is linked to S530. K557 is modified (N6-(2-hydroxyisobutyryl)lysine). Residues R566, 573–575, E629, R655, and 661–664 contribute to the beta-D-fructose 2,6-bisphosphate site; these read MGG and HMQQ. Position 667 is a phosphoserine (S667). R735 serves as a coordination point for beta-D-fructose 2,6-bisphosphate. S775 carries the phosphoserine modification.

Belongs to the phosphofructokinase type A (PFKA) family. ATP-dependent PFK group I subfamily. Eukaryotic two domain clade 'E' sub-subfamily. As to quaternary structure, homo- and heterotetramers. Phosphofructokinase (PFK) enzyme functions as a tetramer composed of different combinations of 3 types of subunits, called PFKM (M), PFKL (L) and PFKP (P). The composition of the PFK tetramer differs according to the tissue type it is present in. The kinetic and regulatory properties of the tetrameric enzyme are dependent on the subunit composition, hence can vary across tissues. Interacts (via C-terminus) with HK1 (via N-terminal spermatogenic cell-specific region). Mg(2+) is required as a cofactor. GlcNAcylation decreases enzyme activity.

It localises to the cytoplasm. The enzyme catalyses beta-D-fructose 6-phosphate + ATP = beta-D-fructose 1,6-bisphosphate + ADP + H(+). It participates in carbohydrate degradation; glycolysis; D-glyceraldehyde 3-phosphate and glycerone phosphate from D-glucose: step 3/4. Its activity is regulated as follows. Allosterically activated by ADP, AMP, or fructose 2,6-bisphosphate, and allosterically inhibited by ATP or citrate. Functionally, catalyzes the phosphorylation of D-fructose 6-phosphate to fructose 1,6-bisphosphate by ATP, the first committing step of glycolysis. In Macaca fascicularis (Crab-eating macaque), this protein is ATP-dependent 6-phosphofructokinase, muscle type (PFKM).